The following is a 177-amino-acid chain: MSRVAKNPVAIPAGVEVKFGAADVTVKGALGSLSTALCNDVEVKLDNGQLTFAAKNDSKFARAMSGTLRALLNNMVNGVSKGFEKKLQLVGVGYRAQAQGDTLNLSLGFSHPVAHKMPAGIKVETPTQTEILVKGADKQLVGQVAAEIRAYRSPEPYKGKGVRYADEVVVLKETKKK.

This sequence belongs to the universal ribosomal protein uL6 family. As to quaternary structure, part of the 50S ribosomal subunit.

Its function is as follows. This protein binds to the 23S rRNA, and is important in its secondary structure. It is located near the subunit interface in the base of the L7/L12 stalk, and near the tRNA binding site of the peptidyltransferase center. The chain is Large ribosomal subunit protein uL6 from Chromobacterium violaceum (strain ATCC 12472 / DSM 30191 / JCM 1249 / CCUG 213 / NBRC 12614 / NCIMB 9131 / NCTC 9757 / MK).